Consider the following 334-residue polypeptide: Biotin synthase (334 aa).

A Radical SAM core domain is found at 55–285 (GSSGSIHACS…VHPRKIIKIA (231 aa)). [4Fe-4S] cluster-binding residues include cysteine 73, cysteine 77, and cysteine 80. [2Fe-2S] cluster is bound by residues cysteine 152, cysteine 213, and lysine 283.

The protein belongs to the radical SAM superfamily. Biotin synthase family. Homodimer. [4Fe-4S] cluster is required as a cofactor. The cofactor is [2Fe-2S] cluster.

It catalyses the reaction (4R,5S)-dethiobiotin + (sulfur carrier)-SH + 2 reduced [2Fe-2S]-[ferredoxin] + 2 S-adenosyl-L-methionine = (sulfur carrier)-H + biotin + 2 5'-deoxyadenosine + 2 L-methionine + 2 oxidized [2Fe-2S]-[ferredoxin]. It participates in cofactor biosynthesis; biotin biosynthesis; biotin from 7,8-diaminononanoate: step 2/2. In terms of biological role, catalyzes the conversion of dethiobiotin (DTB) to biotin by the insertion of a sulfur atom into dethiobiotin via a radical-based mechanism. The protein is Biotin synthase of Chlorobium phaeobacteroides (strain DSM 266 / SMG 266 / 2430).